A 438-amino-acid polypeptide reads, in one-letter code: Neutral metalloprotease ShpI (438 aa).

The N-terminal stretch at 1 to 26 (MINKKKLVTSLVTSSLLATFTLGSFA) is a signal peptide. A propeptide spanning residues 27 to 101 (DAHTYIINNE…KSENALSNSK (75 aa)) is cleaved from the precursor. His-242 is a Zn(2+) binding site. Glu-243 is an active-site residue. Zn(2+)-binding residues include His-246 and Glu-269.

The protein belongs to the peptidase M30 family. It depends on Zn(2+) as a cofactor. In terms of processing, several different N-terminal ends may be produced, the favored N-terminus is position 102.

It is found in the secreted. With respect to regulation, inhibited by metal- and zinc-specific inhibitors, such as EDTA and 1,10-phenanthroline in vitro. Is resistant to all inhibitors of serine, cysteine and aspartic proteases. Its function is as follows. Protease that has a low substrate specificity. Catalyzes the hydrolysis of glucagon, melittin and oxidized beta-insulin at various positions in vitro. Is not able to cleave elastin or the synthetic substrates FAGLA (a substrate for neutral proteinases) and FALGPA (a substrate for collagenase). The chain is Neutral metalloprotease ShpI from Staphylococcus hyicus.